A 555-amino-acid chain; its full sequence is Formate--tetrahydrofolate ligase (555 aa).

65-72 contributes to the ATP binding site; that stretch reads TPAGEGKS.

It belongs to the formate--tetrahydrofolate ligase family.

The catalysed reaction is (6S)-5,6,7,8-tetrahydrofolate + formate + ATP = (6R)-10-formyltetrahydrofolate + ADP + phosphate. Its pathway is one-carbon metabolism; tetrahydrofolate interconversion. The sequence is that of Formate--tetrahydrofolate ligase from Lactococcus lactis subsp. lactis (strain IL1403) (Streptococcus lactis).